Consider the following 471-residue polypeptide: 3-isopropylmalate dehydratase large subunit (471 aa).

Cys347, Cys407, and Cys410 together coordinate [4Fe-4S] cluster.

It belongs to the aconitase/IPM isomerase family. LeuC type 1 subfamily. As to quaternary structure, heterodimer of LeuC and LeuD. Requires [4Fe-4S] cluster as cofactor.

The catalysed reaction is (2R,3S)-3-isopropylmalate = (2S)-2-isopropylmalate. The protein operates within amino-acid biosynthesis; L-leucine biosynthesis; L-leucine from 3-methyl-2-oxobutanoate: step 2/4. Its function is as follows. Catalyzes the isomerization between 2-isopropylmalate and 3-isopropylmalate, via the formation of 2-isopropylmaleate. The polypeptide is 3-isopropylmalate dehydratase large subunit (Acaryochloris marina (strain MBIC 11017)).